The chain runs to 176 residues: dCTP deaminase (176 aa).

Residues 99-104 (RSTLAR) and Asp-115 contribute to the dCTP site. The Proton donor/acceptor role is filled by Glu-125. DCTP is bound at residue Gln-163.

The protein belongs to the dCTP deaminase family. In terms of assembly, homotrimer.

It catalyses the reaction dCTP + H2O + H(+) = dUTP + NH4(+). The protein operates within pyrimidine metabolism; dUMP biosynthesis; dUMP from dCTP (dUTP route): step 1/2. Catalyzes the deamination of dCTP to dUTP. This Pyrobaculum aerophilum (strain ATCC 51768 / DSM 7523 / JCM 9630 / CIP 104966 / NBRC 100827 / IM2) protein is dCTP deaminase.